We begin with the raw amino-acid sequence, 249 residues long: DNA repair protein RecO (249 aa).

Belongs to the RecO family.

Involved in DNA repair and RecF pathway recombination. This is DNA repair protein RecO from Solidesulfovibrio magneticus (strain ATCC 700980 / DSM 13731 / RS-1) (Desulfovibrio magneticus).